Consider the following 410-residue polypeptide: Peptidase T (410 aa).

His-77 contributes to the Zn(2+) binding site. The active site involves Asp-79. Residue Asp-140 participates in Zn(2+) binding. Glu-174 serves as the catalytic Proton acceptor. 3 residues coordinate Zn(2+): Glu-175, Asp-197, and His-379.

This sequence belongs to the peptidase M20B family. Zn(2+) is required as a cofactor.

The protein localises to the cytoplasm. It carries out the reaction Release of the N-terminal residue from a tripeptide.. In terms of biological role, cleaves the N-terminal amino acid of tripeptides. The protein is Peptidase T of Desulfitobacterium hafniense (strain Y51).